The primary structure comprises 435 residues: Histidine--tRNA ligase (435 aa).

Belongs to the class-II aminoacyl-tRNA synthetase family. In terms of assembly, homodimer.

It is found in the cytoplasm. It carries out the reaction tRNA(His) + L-histidine + ATP = L-histidyl-tRNA(His) + AMP + diphosphate + H(+). This Synechococcus sp. (strain ATCC 27144 / PCC 6301 / SAUG 1402/1) (Anacystis nidulans) protein is Histidine--tRNA ligase.